A 1403-amino-acid chain; its full sequence is Baculoviral IAP repeat-containing protein 1f (1403 aa).

3 BIR repeats span residues 60 to 127, 159 to 227, and 278 to 345; these read EAKR…CEFL, EEAR…CEFL, and EELR…CVFL. 4 residues coordinate Zn(2+): cysteine 315, cysteine 318, histidine 335, and cysteine 342. The NACHT domain occupies 464-759; sequence SVMCVEGEAG…EFLAAVRLTE (296 aa). 473–478 contributes to the ATP binding site; it reads GSGKTT.

Component of the NLRC4 inflammasome, at least composed of NLRC4, caspase-1 (CASP1) and some NAIP protein. In terms of assembly, (Microbial infection) Interacts with S.typhimurium (Salmonella) flagellin.

Sensor component of the NLRC4 inflammasome that specifically recognizes and binds flagellin from pathogenic bacteria. Association of pathogenic bacteria proteins drives in turn drive assembly and activation of the NLRC4 inflammasome, promoting caspase-1 activation, cytokine production and macrophage pyroptosis. The NLRC4 inflammasome is activated as part of the innate immune response to a range of intracellular bacteria. The NLRC4 inflammasome senses Gram-negative bacteria such as L.pneumophila and P.aeruginosa, enteric pathogens S.typhimurium (Salmonella) and S.flexneri. May contribute to prevent motor-neuron apoptosis induced by a variety of signals. The protein is Baculoviral IAP repeat-containing protein 1f (Naip6) of Mus musculus (Mouse).